We begin with the raw amino-acid sequence, 216 residues long: Large ribosomal subunit protein eL15 (216 aa).

Residues 170–188 (RGLRKSKGFKGTVKHKWSR) are compositionally biased toward basic residues. The disordered stretch occupies residues 170–201 (RGLRKSKGFKGTVKHKWSRKQKEREEKKRHEA). The segment covering 189–201 (KQKEREEKKRHEA) has biased composition (basic and acidic residues).

This sequence belongs to the eukaryotic ribosomal protein eL15 family.

The sequence is that of Large ribosomal subunit protein eL15 from Saccharolobus islandicus (strain M.16.27) (Sulfolobus islandicus).